Consider the following 639-residue polypeptide: Sodium-dependent phosphate transport protein 2A (639 aa).

Residues 1 to 103 lie on the Cytoplasmic side of the membrane; it reads MISYGENLGG…LRRAGVTLLK (103 aa). 2 positions are modified to phosphoserine: S14 and S34. A helical membrane pass occupies residues 104 to 125; that stretch reads VPLMLSFLYLFVCSLDVLSSAF. Residues 126 to 145 lie on the Extracellular side of the membrane; it reads QLAGGKVAGDIFKDNAILSN. Residues 146–163 form a helical membrane-spanning segment; sequence PVAGLVVGILVTVLVQSS. The Cytoplasmic portion of the chain corresponds to 164–165; it reads ST. Residues 166–185 form a helical membrane-spanning segment; it reads STSIVVSMVSSGLLEVSSAI. Residues 186 to 347 lie on the Extracellular side of the membrane; sequence PIIMGSNIGT…HIFVDTGLPD (162 aa). 2 disulfides stabilise this stretch: C225–C522 and C306–C336. N-linked (GlcNAc...) asparagine glycans are attached at residues N298, N323, and N330. The helical transmembrane segment at 348–370 threads the bilayer; the sequence is LAVGLILLAGSLALLCTCLILLV. Topologically, residues 371–412 are cytoplasmic; sequence KMLNSLLKGQVAKVIQKVINTDFPTPFTWATGYFAMVVGASM. The helical transmembrane segment at 413–436 threads the bilayer; the sequence is TFVVQSSSVFTSAITPLIGLGVIS. At 437–466 the chain is on the extracellular side; that stretch reads IERAYPLTLGSNIGTTTTAILAALASPREK. The chain crosses the membrane as a helical span at residues 467 to 487; sequence LSSAFQIALCHFFFNISGILL. Residues 488–513 lie on the Cytoplasmic side of the membrane; that stretch reads WYPVPCTRLPIRMAKALGKRTAKYRW. T508 is modified (phosphothreonine; by PKC). The helical transmembrane segment at 514 to 534 threads the bilayer; that stretch reads FAVLYLLLCFLLLPSMVFGLS. The Extracellular portion of the chain corresponds to 535-539; the sequence is MAGWR. A helical transmembrane segment spans residues 540-561; sequence AMVGVGAPFGALLAFVVLVSAL. Over 562 to 639 the chain is Cytoplasmic; sequence QHRSPGCLPK…MPHHHDATRL (78 aa). Residue S607 is modified to Phosphoserine. T623 is subject to Phosphothreonine. Position 625 is a phosphoserine (S625).

It belongs to the SLC34A transporter family. Interacts via its C-terminal region with NHERF4. Interacts with NHERF1. Interacts with TMEM174; regulates SLC34A1 internalization by PTH and FGF23.

It localises to the apical cell membrane. The protein localises to the cell membrane. The catalysed reaction is 3 Na(+)(out) + phosphate(out) = 3 Na(+)(in) + phosphate(in). Involved in actively transporting phosphate into cells via Na(+) cotransport in the renal brush border membrane. The cotransport has a Na(+):Pi stoichiometry of 3:1 and is electrogenic. This chain is Sodium-dependent phosphate transport protein 2A, found in Ovis aries (Sheep).